The sequence spans 395 residues: Acetate kinase (395 aa).

Position 7 (Asn7) interacts with Mg(2+). Lys14 contributes to the ATP binding site. Arg92 is a binding site for substrate. Asp149 serves as the catalytic Proton donor/acceptor. ATP contacts are provided by residues 207–211, 282–284, and 329–333; these read HLGNG, DMR, and GIGEN. Glu382 is a Mg(2+) binding site.

The protein belongs to the acetokinase family. In terms of assembly, homodimer. Mg(2+) is required as a cofactor. Mn(2+) serves as cofactor.

The protein localises to the cytoplasm. It catalyses the reaction acetate + ATP = acetyl phosphate + ADP. It participates in metabolic intermediate biosynthesis; acetyl-CoA biosynthesis; acetyl-CoA from acetate: step 1/2. In terms of biological role, catalyzes the formation of acetyl phosphate from acetate and ATP. Can also catalyze the reverse reaction. This is Acetate kinase from Brachyspira hyodysenteriae (strain ATCC 49526 / WA1).